A 65-amino-acid chain; its full sequence is MKEGIHPKYNDVMVKCACGNSFQTRSTKTEISTEICSACHPFFTGKQKLIDTAGRVERFRKKYGM.

4 residues coordinate Zn(2+): cysteine 16, cysteine 18, cysteine 36, and cysteine 39.

This sequence belongs to the bacterial ribosomal protein bL31 family. Type A subfamily. As to quaternary structure, part of the 50S ribosomal subunit. It depends on Zn(2+) as a cofactor.

Binds the 23S rRNA. This Geobacter sulfurreducens (strain ATCC 51573 / DSM 12127 / PCA) protein is Large ribosomal subunit protein bL31.